The sequence spans 870 residues: Endoribonuclease YSH1 (870 aa).

Zn(2+) is bound by residues His-159, His-161, Asp-163, His-164, His-256, and Asp-277. His-499 functions as the Proton donor in the catalytic mechanism. Zn(2+) is bound at residue His-521. The tract at residues 598–627 (ITELTEEKEEADEIKEDNGETDTTQKPNES) is disordered. Positions 601–612 (LTEEKEEADEIK) are enriched in acidic residues. Residues 618–627 (TDTTQKPNES) show a composition bias toward polar residues.

Belongs to the metallo-beta-lactamase superfamily. RNA-metabolizing metallo-beta-lactamase-like family. CPSF2/YSH1 subfamily.

It is found in the nucleus. Component of the cleavage factor I (CF I) involved in pre-mRNA 3'-end processing. The sequence is that of Endoribonuclease YSH1 (YSH1) from Candida albicans (strain SC5314 / ATCC MYA-2876) (Yeast).